The sequence spans 291 residues: T-cell leukemia homeobox protein 3 (291 aa).

The interval 1-56 (MEAPASAQTPHPHEPISFGIDQILNSPDQDSAPAPRGPDGASYLGGPPGGRPGATY) is disordered. Positions 166-225 (RKKPRTSFSRVQICELEKRFHRQKYLASAERAALAKSLKMTDAQVKTWFQNRRTKWRRQT) form a DNA-binding region, homeobox.

The protein localises to the nucleus. The sequence is that of T-cell leukemia homeobox protein 3 (TLX3) from Homo sapiens (Human).